We begin with the raw amino-acid sequence, 80 residues long: Exodeoxyribonuclease 7 small subunit (80 aa).

Belongs to the XseB family. As to quaternary structure, heterooligomer composed of large and small subunits.

It is found in the cytoplasm. The enzyme catalyses Exonucleolytic cleavage in either 5'- to 3'- or 3'- to 5'-direction to yield nucleoside 5'-phosphates.. Bidirectionally degrades single-stranded DNA into large acid-insoluble oligonucleotides, which are then degraded further into small acid-soluble oligonucleotides. The sequence is that of Exodeoxyribonuclease 7 small subunit from Rickettsia conorii (strain ATCC VR-613 / Malish 7).